A 300-amino-acid chain; its full sequence is 4-diphosphocytidyl-2-C-methyl-D-erythritol kinase (300 aa).

Residue lysine 22 is part of the active site. Residue 105-115 (PMGGGLGGGSS) coordinates ATP. Aspartate 147 is an active-site residue.

It belongs to the GHMP kinase family. IspE subfamily.

It catalyses the reaction 4-CDP-2-C-methyl-D-erythritol + ATP = 4-CDP-2-C-methyl-D-erythritol 2-phosphate + ADP + H(+). Its pathway is isoprenoid biosynthesis; isopentenyl diphosphate biosynthesis via DXP pathway; isopentenyl diphosphate from 1-deoxy-D-xylulose 5-phosphate: step 3/6. Catalyzes the phosphorylation of the position 2 hydroxy group of 4-diphosphocytidyl-2C-methyl-D-erythritol. The polypeptide is 4-diphosphocytidyl-2-C-methyl-D-erythritol kinase (Colwellia psychrerythraea (strain 34H / ATCC BAA-681) (Vibrio psychroerythus)).